A 201-amino-acid polypeptide reads, in one-letter code: Recombination protein RecR (201 aa).

The C4-type zinc-finger motif lies at 57 to 72 (CKSCRTFTEEDECAIC). The 96-residue stretch at 81 to 176 (GQLCVVEMPA…KVTRIAHGIP (96 aa)) folds into the Toprim domain.

It belongs to the RecR family.

In terms of biological role, may play a role in DNA repair. It seems to be involved in an RecBC-independent recombinational process of DNA repair. It may act with RecF and RecO. This is Recombination protein RecR from Glaesserella parasuis serovar 5 (strain SH0165) (Haemophilus parasuis).